Here is a 266-residue protein sequence, read N- to C-terminus: Urease accessory protein UreD (266 aa).

The protein belongs to the UreD family. As to quaternary structure, ureD, UreF and UreG form a complex that acts as a GTP-hydrolysis-dependent molecular chaperone, activating the urease apoprotein by helping to assemble the nickel containing metallocenter of UreC. The UreE protein probably delivers the nickel.

It localises to the cytoplasm. Functionally, required for maturation of urease via the functional incorporation of the urease nickel metallocenter. This chain is Urease accessory protein UreD, found in Jannaschia sp. (strain CCS1).